Reading from the N-terminus, the 377-residue chain is uncharacterized protein (377 aa).

Residues Y21–A43 traverse the membrane as a helical segment.

It localises to the membrane. This is an uncharacterized protein from Treponema pallidum (strain Nichols).